The primary structure comprises 108 residues: Small cysteine and glycine repeat-containing protein 8 (108 aa).

Residues 4-84 form a 12 X 2 AA repeats of CG region; sequence CGCGGCGGGC…RRTCSSCGCG (81 aa).

The protein belongs to the KRTAP type 28 family.

Its function is as follows. In the hair cortex, hair keratin intermediate filaments are embedded in an interfilamentous matrix, consisting of hair keratin-associated proteins (KRTAP), which are essential for the formation of a rigid and resistant hair shaft through their extensive disulfide bond cross-linking with abundant cysteine residues of hair keratins. The matrix proteins include the high-sulfur and high-glycine-tyrosine keratins. This is Small cysteine and glycine repeat-containing protein 8 from Homo sapiens (Human).